Consider the following 156-residue polypeptide: Small ribosomal subunit protein uS7 (156 aa).

Belongs to the universal ribosomal protein uS7 family. Part of the 30S ribosomal subunit. Contacts proteins S9 and S11.

Functionally, one of the primary rRNA binding proteins, it binds directly to 16S rRNA where it nucleates assembly of the head domain of the 30S subunit. Is located at the subunit interface close to the decoding center, probably blocks exit of the E-site tRNA. The sequence is that of Small ribosomal subunit protein uS7 from Pseudomonas aeruginosa (strain LESB58).